A 747-amino-acid polypeptide reads, in one-letter code: MFLTKTLIRRSLSTFASSPSDSLLADKALTFLKRHPYQLHHLSANFTPEAASNLLLKSQNDQALILKFLNWANPHQFFTLRCKCITLHILTKFKLYKTAQILAEDVAAKTLDDEYASLVFKSLQETYDLCYSTSSVFDLVVKSYSRLSLIDKALSIVHLAQAHGFMPGVLSYNAVLDATIRSKRNISFAENVFKEMLESQVSPNVFTYNILIRGFCFAGNIDVALTLFDKMETKGCLPNVVTYNTLIDGYCKLRKIDDGFKLLRSMALKGLEPNLISYNVVINGLCREGRMKEVSFVLTEMNRRGYSLDEVTYNTLIKGYCKEGNFHQALVMHAEMLRHGLTPSVITYTSLIHSMCKAGNMNRAMEFLDQMRVRGLCPNERTYTTLVDGFSQKGYMNEAYRVLREMNDNGFSPSVVTYNALINGHCVTGKMEDAIAVLEDMKEKGLSPDVVSYSTVLSGFCRSYDVDEALRVKREMVEKGIKPDTITYSSLIQGFCEQRRTKEACDLYEEMLRVGLPPDEFTYTALINAYCMEGDLEKALQLHNEMVEKGVLPDVVTYSVLINGLNKQSRTREAKRLLLKLFYEESVPSDVTYHTLIENCSNIEFKSVVSLIKGFCMKGMMTEADQVFESMLGKNHKPDGTAYNIMIHGHCRAGDIRKAYTLYKEMVKSGFLLHTVTVIALVKALHKEGKVNELNSVIVHVLRSCELSEAEQAKVLVEINHREGNMDVVLDVLAEMAKDGFLPNGIS.

PPR repeat units follow at residues 133 to 167 (TSSV…GFMP), 168 to 203 (GVLS…QVSP), 204 to 238 (NVFT…GCLP), 239 to 273 (NVVT…GLEP), 274 to 308 (NLIS…GYSL), 309 to 343 (DEVT…GLTP), 344 to 378 (SVIT…GLCP), 379 to 413 (NERT…GFSP), 414 to 448 (SVVT…GLSP), 449 to 483 (DVVS…GIKP), 484 to 518 (DTIT…GLPP), 519 to 553 (DEFT…GVLP), 554 to 588 (DVVT…ESVP), 604 to 638 (EFKS…NHKP), and 639 to 673 (DGTA…GFLL).

The protein belongs to the PPR family. P subfamily.

The polypeptide is Pentatricopeptide repeat-containing protein At5g39710 (EMB2745) (Arabidopsis thaliana (Mouse-ear cress)).